A 203-amino-acid polypeptide reads, in one-letter code: Endo-type membrane-bound lytic murein transglycosylase A (203 aa).

The N-terminal stretch at 1–15 (MKLRWFAFLVVLLAG) is a signal peptide. Cysteine 16 is lipidated: N-palmitoyl cysteine. Cysteine 16 is lipidated: S-diacylglycerol cysteine.

The protein belongs to the transglycosylase Slt family.

It is found in the cell outer membrane. The enzyme catalyses Endolytic cleavage of the (1-&gt;4)-beta-glycosidic linkage between N-acetylmuramic acid (MurNAc) and N-acetylglucosamine (GlcNAc) residues in peptidoglycan with concomitant formation of a 1,6-anhydrobond in the MurNAc residue.. Functionally, murein-degrading enzyme. May play a role in recycling of muropeptides during cell elongation and/or cell division. Preferentially cleaves at a distance of more than two disaccharide units from the ends of the glycan chain. This chain is Endo-type membrane-bound lytic murein transglycosylase A, found in Citrobacter koseri (strain ATCC BAA-895 / CDC 4225-83 / SGSC4696).